The following is a 270-amino-acid chain: MTSLKQQPPHLLRGIPLAVQNLKKAFGTREVLKDIDLHIPAGQFVAIVGRSGCGKSTLLRLLAGLDKPTEGQLLAGSAPLDDAREDTRLMFQEARLLPWKKVIDNVGLGLGGNWRPQALEALEAVGLAERANEWPAALSGGQKQRVALARALIHKPRLLLLDEPLGALDALTRIEMQQLIEKLWGQYGFTVLLVTHDVSEAVAIADRVILIEEGQIGLDLLVDLPRPRARGSHRLAALEAEVLNRVLAIPGSPPDPEPFSPLPTQLSWAN.

The ABC transporter domain maps to 17–238 (LAVQNLKKAF…ARGSHRLAAL (222 aa)). 49–56 (GRSGCGKS) serves as a coordination point for ATP.

This sequence belongs to the ABC transporter superfamily. Aliphatic sulfonates importer (TC 3.A.1.17.2) family. In terms of assembly, the complex is composed of two ATP-binding proteins (SsuB), two transmembrane proteins (SsuC) and a solute-binding protein (SsuA).

It localises to the cell inner membrane. It catalyses the reaction ATP + H2O + aliphatic sulfonate-[sulfonate-binding protein]Side 1 = ADP + phosphate + aliphatic sulfonateSide 2 + [sulfonate-binding protein]Side 1.. Part of the ABC transporter complex SsuABC involved in aliphatic sulfonates import. Responsible for energy coupling to the transport system. This Pseudomonas syringae pv. tomato (strain ATCC BAA-871 / DC3000) protein is Aliphatic sulfonates import ATP-binding protein SsuB 3.